A 509-amino-acid polypeptide reads, in one-letter code: ATP synthase subunit alpha (509 aa).

Gly169–Thr176 contributes to the ATP binding site.

It belongs to the ATPase alpha/beta chains family. As to quaternary structure, F-type ATPases have 2 components, CF(1) - the catalytic core - and CF(0) - the membrane proton channel. CF(1) has five subunits: alpha(3), beta(3), gamma(1), delta(1), epsilon(1). CF(0) has three main subunits: a(1), b(2) and c(9-12). The alpha and beta chains form an alternating ring which encloses part of the gamma chain. CF(1) is attached to CF(0) by a central stalk formed by the gamma and epsilon chains, while a peripheral stalk is formed by the delta and b chains.

The protein localises to the cell inner membrane. The catalysed reaction is ATP + H2O + 4 H(+)(in) = ADP + phosphate + 5 H(+)(out). Its function is as follows. Produces ATP from ADP in the presence of a proton gradient across the membrane. The alpha chain is a regulatory subunit. This is ATP synthase subunit alpha from Methylobacterium nodulans (strain LMG 21967 / CNCM I-2342 / ORS 2060).